Here is a 738-residue protein sequence, read N- to C-terminus: Glucan 1,4-alpha-glucosidase SusB (738 aa).

Residues 1-21 (MKKRKILSLIAFLCISFIANA) form the signal peptide. Residue Glu-194 participates in Ca(2+) binding. Substrate contacts are provided by residues 215–217 (PNS), 437–439 (HHE), and 507–508 (HE). Ca(2+) contacts are provided by Glu-508, Glu-526, and Glu-532. The Proton donor/acceptor role is filled by Glu-532.

This sequence belongs to the glycosyl hydrolase 97 family. As to quaternary structure, monomer. It depends on Ca(2+) as a cofactor.

It is found in the periplasm. It carries out the reaction Hydrolysis of terminal (1-&gt;4)-linked alpha-D-glucose residues successively from non-reducing ends of the chains with release of beta-D-glucose.. It functions in the pathway glycan degradation; starch degradation. Its function is as follows. Glucoamylase that hydrolyzes alpha-1,4-glucosidic linkages, alpha-1,6-, alpha-1,3- and alpha-1,2-glucosidic linkages during starch degradation. This is Glucan 1,4-alpha-glucosidase SusB (susB) from Bacteroides thetaiotaomicron (strain ATCC 29148 / DSM 2079 / JCM 5827 / CCUG 10774 / NCTC 10582 / VPI-5482 / E50).